A 236-amino-acid polypeptide reads, in one-letter code: Cysteine-rich venom protein TRI1 (236 aa).

Positions 1-18 (MIVFILLSLAAVLEQSFG) are cleaved as a signal peptide. The SCP domain maps to 37–165 (VDRHNSFRRS…GYSYFYVCQY (129 aa)). Disulfide bonds link Cys-74–Cys-152, Cys-91–Cys-166, Cys-147–Cys-163, Cys-185–Cys-192, Cys-188–Cys-197, Cys-201–Cys-234, Cys-210–Cys-228, and Cys-219–Cys-232. Positions 201-234 (CLREDKFTNCKSLVQQNSCQHDWTRKNCPATCFC) constitute a ShKT domain.

Belongs to the CRISP family. As to expression, expressed by the venom gland.

Its subcellular location is the secreted. Functionally, blocks contraction of smooth muscle elicited by high potassium-induced depolarization, but does not block caffeine-stimulated contraction. May target voltage-gated calcium channels on smooth muscle. The polypeptide is Cysteine-rich venom protein TRI1 (Trimorphodon biscutatus (Western lyre snake)).